A 272-amino-acid chain; its full sequence is Acyl-[acyl-carrier-protein]--UDP-N-acetylglucosamine O-acyltransferase (272 aa).

The protein belongs to the transferase hexapeptide repeat family. LpxA subfamily. In terms of assembly, homotrimer.

The protein localises to the cytoplasm. It carries out the reaction a (3R)-hydroxyacyl-[ACP] + UDP-N-acetyl-alpha-D-glucosamine = a UDP-3-O-[(3R)-3-hydroxyacyl]-N-acetyl-alpha-D-glucosamine + holo-[ACP]. It participates in glycolipid biosynthesis; lipid IV(A) biosynthesis; lipid IV(A) from (3R)-3-hydroxytetradecanoyl-[acyl-carrier-protein] and UDP-N-acetyl-alpha-D-glucosamine: step 1/6. In terms of biological role, involved in the biosynthesis of lipid A, a phosphorylated glycolipid that anchors the lipopolysaccharide to the outer membrane of the cell. This Rhizobium etli (strain ATCC 51251 / DSM 11541 / JCM 21823 / NBRC 15573 / CFN 42) protein is Acyl-[acyl-carrier-protein]--UDP-N-acetylglucosamine O-acyltransferase.